We begin with the raw amino-acid sequence, 282 residues long: Probable septum site-determining protein MinC (282 aa).

Residues 108–127 (AAARSADEESANAAAAAPAA) form a disordered region. Residues 118–127 (ANAAAAAPAA) show a composition bias toward low complexity.

The protein belongs to the MinC family. As to quaternary structure, interacts with MinD and FtsZ.

Its function is as follows. Cell division inhibitor that blocks the formation of polar Z ring septums. Rapidly oscillates between the poles of the cell to destabilize FtsZ filaments that have formed before they mature into polar Z rings. Prevents FtsZ polymerization. The sequence is that of Probable septum site-determining protein MinC from Paraburkholderia xenovorans (strain LB400).